Consider the following 121-residue polypeptide: ATP synthase epsilon chain (121 aa).

It belongs to the ATPase epsilon chain family. F-type ATPases have 2 components, CF(1) - the catalytic core - and CF(0) - the membrane proton channel. CF(1) has five subunits: alpha(3), beta(3), gamma(1), delta(1), epsilon(1). CF(0) has three main subunits: a, b and c.

It is found in the cell membrane. Its function is as follows. Produces ATP from ADP in the presence of a proton gradient across the membrane. The chain is ATP synthase epsilon chain from Mycolicibacterium smegmatis (strain ATCC 700084 / mc(2)155) (Mycobacterium smegmatis).